Consider the following 528-residue polypeptide: MTVVPGDHLLEPEAAGGGGGDPPQGGCGSGGGGGGCDRYEPLPPALPAAGEQDCCGERVVINISGLRFETQLKTLCQFPETLLGDPKRRMRYFDPLRNEYFFDRNRPSFDAILYYYQSGGRIRRPVNVPIDIFSEEIRFYQLGEEAMEKFREDEGFLREEERPLPRRDFQRQVWLLFEYPESSGPARGIAIVSVLVILISIVIFCLETLPEFRDEKDYPASPSQDVFEAANNSTSGAPSGASSFSDPFFVVETLCIIWFSFELLVRFFACPSKATFSRNIMNLIDIVAIIPYFITLGTELAERQGNGQQAMSLAILRVIRLVRVFRIFKLSRHSKGLQILGQTLKASMRELGLLIFFLFIGVILFSSAVYFAEADDPSSGFNSIPDAFWWAVVTMTTVGYGDMHPVTIGGKIVGSLCAIAGVLTIALPVPVIVSNFNYFYHRETEGEEQAQYMHVGSCQHLSSSAEELRKARSNSTLSKSEYMVIEEGGMNHSAFPQTPFKTGNSTATCTTNNNPNSCVNIKKIFTDV.

Positions Met-1–Gly-32 are disordered. Residues Met-1–Arg-187 lie on the Cytoplasmic side of the membrane. Positions Ala-15 to Gly-32 are enriched in gly residues. Residues Gly-188–Leu-206 traverse the membrane as a helical segment. Topologically, residues Glu-207 to Pro-247 are extracellular. N-linked (GlcNAc...) asparagine glycosylation occurs at Asn-232. Residues Phe-248 to Ala-269 traverse the membrane as a helical segment. Cys-270 is lipidated: S-palmitoyl cysteine. Topologically, residues Cys-270 to Ile-280 are cytoplasmic. The helical transmembrane segment at Met-281–Ala-301 threads the bilayer. The Extracellular segment spans residues Glu-302–Ile-315. The chain crosses the membrane as a helical; Voltage-sensor span at residues Leu-316–Ser-334. Topologically, residues Lys-335–Glu-350 are cytoplasmic. The chain crosses the membrane as a helical span at residues Leu-351–Tyr-370. At Phe-371–Lys-411 the chain is on the extracellular side. The Selectivity filter signature appears at Thr-397–Asp-402. A helical membrane pass occupies residues Ile-412–Ser-434. The Cytoplasmic portion of the chain corresponds to Asn-435–Val-528. The tract at residues Asn-435–Val-528 is interaction with KCNE4. The residue at position 452 (Tyr-452) is a Phosphotyrosine. Ser-473 bears the Phosphoserine; by PKA mark. The short motif at Thr-526 to Val-528 is the PDZ-binding element.

Belongs to the potassium channel family. A (Shaker) (TC 1.A.1.2) subfamily. Kv1.3/KCNA3 sub-subfamily. In terms of assembly, homotetramer. Forms heterooligomers with KCNE4 which inhibits KCNA3 activity by impairing localization to the cell membrane. The stoichiometry of KCNA3 and KCNE4 in the heterooligomers are 4:1, 4:2, 4:3 or 4:4 respectively. Increasing the number of KCNE4 subunits steadily slows the activation KCNA3 and decreases its abundance at the cell membrane. However, a single subunit of KCNE4 is sufficient for the cooperative enhancement of the inactivating function of the channel. Interacts with SEC24D; this interaction is reduced in the presence of KCNE4. Interacts with DLG1, DLG2 and DLG4 via their PDZ domains. Post-translationally, N-glycosylation promotes the cell surface expression. In terms of processing, phosphorylation on Tyr-452 inhibits its channel activity.

It is found in the cell membrane. It carries out the reaction K(+)(in) = K(+)(out). With respect to regulation, activity is up-regulated by JAK2. Functionally, mediates the voltage-dependent potassium ion permeability of excitable membranes. Assuming opened or closed conformations in response to the voltage difference across the membrane, the protein forms a potassium-selective channel through which potassium ions may pass in accordance with their electrochemical gradient. This chain is Potassium voltage-gated channel subfamily A member 3 (Kcna3), found in Mus musculus (Mouse).